The following is a 318-amino-acid chain: Acetaldehyde dehydrogenase 2 (318 aa).

9–12 contributes to the NAD(+) binding site; that stretch reads SGNI. Cysteine 129 serves as the catalytic Acyl-thioester intermediate. NAD(+) contacts are provided by residues 160–168 and asparagine 288; that span reads SAGPGTRAN.

This sequence belongs to the acetaldehyde dehydrogenase family.

The catalysed reaction is acetaldehyde + NAD(+) + CoA = acetyl-CoA + NADH + H(+). This chain is Acetaldehyde dehydrogenase 2, found in Mycolicibacterium vanbaalenii (strain DSM 7251 / JCM 13017 / BCRC 16820 / KCTC 9966 / NRRL B-24157 / PYR-1) (Mycobacterium vanbaalenii).